The sequence spans 181 residues: Protein Syd (181 aa).

This sequence belongs to the Syd family.

The protein localises to the cell inner membrane. Functionally, interacts with the SecY protein in vivo. May bind preferentially to an uncomplexed state of SecY, thus functioning either as a chelating agent for excess SecY in the cell or as a regulatory factor that negatively controls the translocase function. In Klebsiella pneumoniae subsp. pneumoniae (strain ATCC 700721 / MGH 78578), this protein is Protein Syd.